The primary structure comprises 131 residues: Methylglyoxal synthase (131 aa).

The 131-residue stretch at 1 to 131 (MKIALIAHDK…GDLDYRKLRK (131 aa)) folds into the MGS-like domain. Substrate-binding positions include His8, Lys12, 34-37 (TGTT), and 54-55 (SG). Asp60 serves as the catalytic Proton donor/acceptor. His87 is a binding site for substrate.

This sequence belongs to the methylglyoxal synthase family.

The catalysed reaction is dihydroxyacetone phosphate = methylglyoxal + phosphate. Catalyzes the formation of methylglyoxal from dihydroxyacetone phosphate. In Bacillus cereus (strain AH820), this protein is Methylglyoxal synthase.